The chain runs to 198 residues: Transcriptional regulator GfcR (198 aa).

This sequence belongs to the purine/pyrimidine phosphoribosyltransferase family. GfcR subfamily.

This is Transcriptional regulator GfcR from Methanocorpusculum labreanum (strain ATCC 43576 / DSM 4855 / Z).